The sequence spans 878 residues: NUT family member 2E (878 aa).

Disordered stretches follow at residues 273 to 324, 417 to 511, 527 to 560, 622 to 757, and 775 to 878; these read WSQG…DDSC, QKSQ…VPEE, LLGPSLGATGEPEKQREEGKVKQPQEEDWTPPDP, RLPP…EEEE, and WLPQ…HCSQ. Composition is skewed to pro residues over residues 278 to 288 and 427 to 444; these read PLPPPPPPAAQ and CLPPPATPRLEPRGPPAP. Basic and acidic residues-rich tracts occupy residues 537–551 and 622–631; these read EPEKQREEGKVKQPQ and RLPPLKEKQH.

It belongs to the NUT family.

The sequence is that of NUT family member 2E (NUTM2E) from Homo sapiens (Human).